Consider the following 123-residue polypeptide: Large ribosomal subunit protein uL14 (123 aa).

It belongs to the universal ribosomal protein uL14 family. In terms of assembly, part of the 50S ribosomal subunit. Forms a cluster with proteins L3 and L19. In the 70S ribosome, L14 and L19 interact and together make contacts with the 16S rRNA in bridges B5 and B8.

Functionally, binds to 23S rRNA. Forms part of two intersubunit bridges in the 70S ribosome. This chain is Large ribosomal subunit protein uL14, found in Sodalis glossinidius (strain morsitans).